Here is a 327-residue protein sequence, read N- to C-terminus: NADPH-dependent aldose reductase GRE3 (327 aa).

Y49 (proton donor) is an active-site residue. H111 lines the substrate pocket. Residue 219 to 286 (SSFGPQSFIE…SSKKERLLGN (68 aa)) coordinates NADP(+).

The protein belongs to the aldo/keto reductase family. As to quaternary structure, monomer.

It is found in the cytoplasm. Its subcellular location is the nucleus. It catalyses the reaction an alditol + NAD(+) = an aldose + NADH + H(+). It carries out the reaction an alditol + NADP(+) = an aldose + NADPH + H(+). Aldose reductase with a broad substrate specificity. Reduces the cytotoxic compound methylglyoxal (MG) to acetol and (R)-lactaldehyde under stress conditions. MG is synthesized via a bypath of glycolysis from dihydroxyacetone phosphate and is believed to play a role in cell cycle regulation and stress adaptation. In pentose-fermenting yeasts, aldose reductase catalyzes the reduction of xylose into xylitol. The purified enzyme catalyzes this reaction, but the inability of S.cerevisiae to grow on xylose as sole carbon source indicates that the physiological function is more likely methylglyoxal reduction. The polypeptide is NADPH-dependent aldose reductase GRE3 (Saccharomyces cerevisiae (strain ATCC 204508 / S288c) (Baker's yeast)).